Reading from the N-terminus, the 393-residue chain is GTP exchange factor for ARFs 1 (393 aa).

Residues 1 to 12 (MSSRYSERNGLS) are compositionally biased toward polar residues. The segment at 1–21 (MSSRYSERNGLSETEKMTLPK) is disordered. Residues 12-54 (SETEKMTLPKVRKRKAQLVDEIEALKNEVREVDEELDQVYYTH) are a coiled coil. The SEC7 domain maps to 53 to 239 (THPKSKEYHK…TEVYESVSVT (187 aa)). Positions 261–377 (HAEREGWLFK…MRSWINAISR (117 aa)) constitute a PH domain.

In terms of biological role, promotes guanine-nucleotide exchange on ARF. Promotes the activation of ARF through replacement of GDP with GTP. Plays a role in cell shedding during embryogenesis, probably by promoting the endocytosis of cell adhesion molecules. The chain is GTP exchange factor for ARFs 1 (grp-1) from Caenorhabditis elegans.